A 152-amino-acid polypeptide reads, in one-letter code: MNPAHLLVLLAVCVSLLGASTIPPLPLNLVQFSNMIKCTIPGSRPLLDYADYGCYCGAGGSGTPVDELDRCCQTHDNCYSQAKKHPACKSPLDSPYIKIYSYTCSGGSLTCRDDNDECGAFICNCDRTAAICFAGAPYNKENYNIDTKKHCK.

The first 21 residues, 1 to 21, serve as a signal peptide directing secretion; that stretch reads MNPAHLLVLLAVCVSLLGAST. The propeptide occupies 22–27; that stretch reads IPPLPL. Cystine bridges form between Cys38–Cys104, Cys54–Cys151, Cys56–Cys72, Cys71–Cys132, Cys78–Cys125, Cys88–Cys118, and Cys111–Cys123. The Ca(2+) site is built by Tyr55, Gly57, and Gly59. His75 is an active-site residue. Asp76 is a binding site for Ca(2+). Asp126 is a catalytic residue.

The protein belongs to the phospholipase A2 family. Group I subfamily. Ca(2+) is required as a cofactor.

It localises to the secreted. It catalyses the reaction a 1,2-diacyl-sn-glycero-3-phosphocholine + H2O = a 1-acyl-sn-glycero-3-phosphocholine + a fatty acid + H(+). PA2 catalyzes the calcium-dependent hydrolysis of the 2-acyl groups in 3-sn-phosphoglycerides. The protein is Phospholipase A2 GL16-1 of Laticauda semifasciata (Black-banded sea krait).